Here is a 268-residue protein sequence, read N- to C-terminus: Malonyl-[acyl-carrier protein] O-methyltransferase 1 (268 aa).

It belongs to the methyltransferase superfamily.

The enzyme catalyses malonyl-[ACP] + S-adenosyl-L-methionine = malonyl-[ACP] methyl ester + S-adenosyl-L-homocysteine. It participates in cofactor biosynthesis; biotin biosynthesis. Functionally, converts the free carboxyl group of a malonyl-thioester to its methyl ester by transfer of a methyl group from S-adenosyl-L-methionine (SAM). It allows to synthesize pimeloyl-ACP via the fatty acid synthetic pathway. This Ilyobacter polytropus (strain ATCC 51220 / DSM 2926 / LMG 16218 / CuHBu1) protein is Malonyl-[acyl-carrier protein] O-methyltransferase 1.